Consider the following 72-residue polypeptide: Protein P13 (72 aa).

It localises to the virion membrane. The sequence is that of Protein P13 (P13) from Pseudomonas phage phi6 (Bacteriophage phi-6).